Consider the following 492-residue polypeptide: Ketol-acid reductoisomerase (NADP(+)) (492 aa).

The region spanning 14 to 208 (LDQLGRCRFM…GGHKAGVLES (195 aa)) is the KARI N-terminal Rossmann domain. NADP(+) contacts are provided by residues 45-48 (CGAQ), arginine 68, arginine 76, serine 78, and 108-110 (DKQ). The active site involves histidine 132. Glycine 158 contacts NADP(+). 2 KARI C-terminal knotted domains span residues 209 to 344 (SFVA…NAPK) and 345 to 485 (YDGK…MTDM). The Mg(2+) site is built by aspartate 217, glutamate 221, glutamate 389, and glutamate 393. Residue serine 414 participates in substrate binding.

This sequence belongs to the ketol-acid reductoisomerase family. Mg(2+) is required as a cofactor.

It carries out the reaction (2R)-2,3-dihydroxy-3-methylbutanoate + NADP(+) = (2S)-2-acetolactate + NADPH + H(+). The enzyme catalyses (2R,3R)-2,3-dihydroxy-3-methylpentanoate + NADP(+) = (S)-2-ethyl-2-hydroxy-3-oxobutanoate + NADPH + H(+). Its pathway is amino-acid biosynthesis; L-isoleucine biosynthesis; L-isoleucine from 2-oxobutanoate: step 2/4. It functions in the pathway amino-acid biosynthesis; L-valine biosynthesis; L-valine from pyruvate: step 2/4. Its function is as follows. Involved in the biosynthesis of branched-chain amino acids (BCAA). Catalyzes an alkyl-migration followed by a ketol-acid reduction of (S)-2-acetolactate (S2AL) to yield (R)-2,3-dihydroxy-isovalerate. In the isomerase reaction, S2AL is rearranged via a Mg-dependent methyl migration to produce 3-hydroxy-3-methyl-2-ketobutyrate (HMKB). In the reductase reaction, this 2-ketoacid undergoes a metal-dependent reduction by NADPH to yield (R)-2,3-dihydroxy-isovalerate. This Haemophilus influenzae (strain 86-028NP) protein is Ketol-acid reductoisomerase (NADP(+)).